The chain runs to 163 residues: Regulator of chromosome segregation (163 aa).

Interacts with CpsD and ParB.

It localises to the cytoplasm. It is found in the nucleoid. The protein resides in the cell membrane. Its function is as follows. Required for cell division and chromosome segregation. Binds to DNA and is involved in segregating the origin of replication (oriC) region to new daughter cells. When the nucleoid is not properly segregated, involved in blocking the cell division to protect the nucleoid against premature truncation by the newly forming septum, a function which is dependent on CpsD and its autophosphorylation level. In Streptococcus pneumoniae serotype 2 (strain D39 / NCTC 7466), this protein is Regulator of chromosome segregation.